A 71-amino-acid chain; its full sequence is Holin (71 aa).

The Cytoplasmic segment spans residues 1 to 24; sequence MKEFLTAATSSTGGASLVGAATGQ. Residues 25–45 form a helical; Signal-anchor for type II membrane protein membrane-spanning segment; the sequence is LYIAGATFICFLLFGAWGAYW. Residues 46 to 71 are Periplasmic-facing; that stretch reads KYRDSKAIQEALNDGDLNKALKIRGR.

As to quaternary structure, homomultimer.

Its subcellular location is the host cell inner membrane. Accumulates harmlessly in the cytoplasmic membrane until it reaches a critical concentration that triggers the formation of nanometer-scale pores (pinholes) causing host cell membrane depolarization and endolysin refolding and release into the periplasmic space. Once the pinholin has permeabilized the host cell membrane, the SAR-endolysin is released into the periplasm and breaks down the peptidoglycan layer. Determines the precise timing of host cell lysis. Participates with the SAR-endolysin and the U-spanin protein in the sequential events which lead to the programmed host cell lysis releasing the mature viral particles from the host cell. The chain is Holin from Escherichia coli (Bacteriophage T1).